A 383-amino-acid chain; its full sequence is L-lactate dehydrogenase (383 aa).

An FMN hydroxy acid dehydrogenase domain is found at 1–380 (MIISSGNDYR…NTDCLVQAIK (380 aa)). Y24 lines the substrate pocket. The FMN site is built by S106 and Q127. Y129 contacts substrate. T155 provides a ligand contact to FMN. R164 provides a ligand contact to substrate. K251 provides a ligand contact to FMN. The active-site Proton acceptor is the H275. R278 contributes to the substrate binding site. 306–330 (DSGIRNGLDVVRMLALGADTVLLGR) is a binding site for FMN.

This sequence belongs to the FMN-dependent alpha-hydroxy acid dehydrogenase family. Requires FMN as cofactor.

The protein localises to the cell inner membrane. The enzyme catalyses (S)-lactate + A = pyruvate + AH2. Its function is as follows. Catalyzes the conversion of L-lactate to pyruvate. Is coupled to the respiratory chain. The protein is L-lactate dehydrogenase of Acinetobacter baumannii (strain SDF).